The following is a 281-amino-acid chain: NADPH-dependent 7-cyano-7-deazaguanine reductase (281 aa).

A substrate-binding site is contributed by 88-90 (VES). 90–91 (SK) serves as a coordination point for NADPH. The active-site Thioimide intermediate is the C189. The active-site Proton donor is D196. Residue 228 to 229 (HE) coordinates substrate. 257–258 (RG) lines the NADPH pocket.

This sequence belongs to the GTP cyclohydrolase I family. QueF type 2 subfamily. As to quaternary structure, homodimer.

It is found in the cytoplasm. The enzyme catalyses 7-aminomethyl-7-carbaguanine + 2 NADP(+) = 7-cyano-7-deazaguanine + 2 NADPH + 3 H(+). The protein operates within tRNA modification; tRNA-queuosine biosynthesis. Functionally, catalyzes the NADPH-dependent reduction of 7-cyano-7-deazaguanine (preQ0) to 7-aminomethyl-7-deazaguanine (preQ1). The chain is NADPH-dependent 7-cyano-7-deazaguanine reductase from Cronobacter sakazakii (strain ATCC BAA-894) (Enterobacter sakazakii).